Reading from the N-terminus, the 368-residue chain is Carbamoyl phosphate synthase small chain (368 aa).

Residues 1–178 form a CPSase region; sequence MKAVLGLEDG…GAECAWKGSG (178 aa). Residues S45, G230, and G232 each contribute to the L-glutamine site. Positions 182 to 368 constitute a Glutamine amidotransferase type-1 domain; sequence HAVVVDLGIK…KVVKVLGGDL (187 aa). The active-site Nucleophile is the C257. Positions 258, 261, 299, 301, and 302 each coordinate L-glutamine. Active-site residues include H342 and E344.

Belongs to the CarA family. As to quaternary structure, composed of two chains; the small (or glutamine) chain promotes the hydrolysis of glutamine to ammonia, which is used by the large (or ammonia) chain to synthesize carbamoyl phosphate. Tetramer of heterodimers (alpha,beta)4.

It carries out the reaction hydrogencarbonate + L-glutamine + 2 ATP + H2O = carbamoyl phosphate + L-glutamate + 2 ADP + phosphate + 2 H(+). The enzyme catalyses L-glutamine + H2O = L-glutamate + NH4(+). The protein operates within amino-acid biosynthesis; L-arginine biosynthesis; carbamoyl phosphate from bicarbonate: step 1/1. It functions in the pathway pyrimidine metabolism; UMP biosynthesis via de novo pathway; (S)-dihydroorotate from bicarbonate: step 1/3. Small subunit of the glutamine-dependent carbamoyl phosphate synthetase (CPSase). CPSase catalyzes the formation of carbamoyl phosphate from the ammonia moiety of glutamine, carbonate, and phosphate donated by ATP, constituting the first step of 2 biosynthetic pathways, one leading to arginine and/or urea and the other to pyrimidine nucleotides. The small subunit (glutamine amidotransferase) binds and cleaves glutamine to supply the large subunit with the substrate ammonia. The protein is Carbamoyl phosphate synthase small chain of Methanosarcina acetivorans (strain ATCC 35395 / DSM 2834 / JCM 12185 / C2A).